The primary structure comprises 386 residues: NADH kinase pos5, mitochondrial (386 aa).

The N-terminal 42 residues, 1-42 (MIRAANGFRISVRNTAVCLAPNFRQLKGFSIINLGSLQYFRY), are a transit peptide targeting the mitochondrion.

The protein belongs to the NAD kinase family.

It is found in the mitochondrion. It catalyses the reaction NADH + ATP = ADP + NADPH + H(+). Its function is as follows. Phosphorylates both NADH and NAD(+), with a preference for NADH. Anti-oxidant factor and key source of the cellular reductant NADPH. In Schizosaccharomyces pombe (strain 972 / ATCC 24843) (Fission yeast), this protein is NADH kinase pos5, mitochondrial (pos5).